The following is a 441-amino-acid chain: Polyketide methyltransferase ustM (441 aa).

The tract at residues 266–368 (LEVGAGLGGT…VRKLLRGGGF (103 aa)) is methyltransferase (CMeT) domain.

Belongs to the methyltransferase superfamily.

It functions in the pathway secondary metabolite biosynthesis. Polyketide methyltransferase; part of the gene cluster that mediates the biosynthesis of ustilaginoidins, dimeric gamma-naphthopyrones isolated from different fungal species. The first step in the biosynthesis of ustilaginoidins is the production of gamma-naphthopyrone precursor YWA1 by the non-reducing polyketide synthase ustP, via condensation of one acetyl-CoA starter unit with 6 malonyl-CoA units. YWA1 is then probably substrate of the ustZ to yield norrubrofusarin via a dehydration reaction. A key enzyme in the biosynthetic pathway is the laccase ustL, which catalyzes the oxidative dimerization of norrubrofusarin to ustilaginoidin A. It can produce the M- and P-atropisomers in varying amounts, depending on the reaction conditions. For the biosynthesis of 3-methylustilaginoid in derivatives such as chaetochromin A, a methylated derivative of YWA1 is required. The C-methylation is considered to be catalyzed by ustM, the phosphopantetheine attachment site of which indicates that it acts on the growing polyketide chain before release of the product. For the biosynthesis of chaetochromin A, it is assumed that saturation of the D2 double bond takes place before dimerization, and is probably catalyzed by an external reductase because no candidate gene was identified within the cluster. The polypeptide is Polyketide methyltransferase ustM (Ustilaginoidea virens (Rice false smut fungus)).